The primary structure comprises 892 residues: Alanine--tRNA ligase (892 aa).

Zn(2+)-binding residues include histidine 596, histidine 600, cysteine 700, and histidine 704.

The protein belongs to the class-II aminoacyl-tRNA synthetase family. Zn(2+) serves as cofactor.

It localises to the cytoplasm. The catalysed reaction is tRNA(Ala) + L-alanine + ATP = L-alanyl-tRNA(Ala) + AMP + diphosphate. Catalyzes the attachment of alanine to tRNA(Ala) in a two-step reaction: alanine is first activated by ATP to form Ala-AMP and then transferred to the acceptor end of tRNA(Ala). Also edits incorrectly charged Ser-tRNA(Ala) and Gly-tRNA(Ala) via its editing domain. This chain is Alanine--tRNA ligase, found in Methanococcus maripaludis (strain C7 / ATCC BAA-1331).